The primary structure comprises 262 residues: Sulfur carrier protein FdhD (262 aa).

The active-site Cysteine persulfide intermediate is C107.

This sequence belongs to the FdhD family.

Its subcellular location is the cytoplasm. Its function is as follows. Required for formate dehydrogenase (FDH) activity. Acts as a sulfur carrier protein that transfers sulfur from IscS to the molybdenum cofactor prior to its insertion into FDH. The polypeptide is Sulfur carrier protein FdhD (Bacillus pumilus (strain SAFR-032)).